We begin with the raw amino-acid sequence, 143 residues long: Endoribonuclease YbeY (143 aa).

The Zn(2+) site is built by H113, H117, and D123.

The protein belongs to the endoribonuclease YbeY family. The cofactor is Zn(2+).

The protein resides in the cytoplasm. In terms of biological role, single strand-specific metallo-endoribonuclease involved in late-stage 70S ribosome quality control and in maturation of the 3' terminus of the 16S rRNA. In Elusimicrobium minutum (strain Pei191), this protein is Endoribonuclease YbeY.